A 119-amino-acid chain; its full sequence is Ribonuclease P protein component (119 aa).

Belongs to the RnpA family. Consists of a catalytic RNA component (M1 or rnpB) and a protein subunit.

The enzyme catalyses Endonucleolytic cleavage of RNA, removing 5'-extranucleotides from tRNA precursor.. In terms of biological role, RNaseP catalyzes the removal of the 5'-leader sequence from pre-tRNA to produce the mature 5'-terminus. It can also cleave other RNA substrates such as 4.5S RNA. The protein component plays an auxiliary but essential role in vivo by binding to the 5'-leader sequence and broadening the substrate specificity of the ribozyme. This chain is Ribonuclease P protein component, found in Klebsiella pneumoniae (strain 342).